Reading from the N-terminus, the 320-residue chain is Ferrochelatase (320 aa).

Fe cation is bound by residues His194 and Glu275.

Belongs to the ferrochelatase family.

Its subcellular location is the cytoplasm. It carries out the reaction heme b + 2 H(+) = protoporphyrin IX + Fe(2+). Its pathway is porphyrin-containing compound metabolism; protoheme biosynthesis; protoheme from protoporphyrin-IX: step 1/1. Catalyzes the ferrous insertion into protoporphyrin IX. The chain is Ferrochelatase from Xylella fastidiosa (strain M12).